Reading from the N-terminus, the 429-residue chain is Ribosomal RNA small subunit methyltransferase B (429 aa).

Residues 254–260 (CAAPGGK), Asp277, Asp303, and Asp322 contribute to the S-adenosyl-L-methionine site. The active-site Nucleophile is the Cys375.

Belongs to the class I-like SAM-binding methyltransferase superfamily. RsmB/NOP family.

It localises to the cytoplasm. The enzyme catalyses cytidine(967) in 16S rRNA + S-adenosyl-L-methionine = 5-methylcytidine(967) in 16S rRNA + S-adenosyl-L-homocysteine + H(+). Its function is as follows. Specifically methylates the cytosine at position 967 (m5C967) of 16S rRNA. In Salmonella arizonae (strain ATCC BAA-731 / CDC346-86 / RSK2980), this protein is Ribosomal RNA small subunit methyltransferase B.